The following is a 300-amino-acid chain: Protein phosphatase 2C 1 (300 aa).

In terms of domain architecture, PPM-type phosphatase spans isoleucine 23–leucine 298. 4 residues coordinate Mn(2+): aspartate 57, glycine 58, aspartate 237, and aspartate 289.

The protein belongs to the PP2C family. The cofactor is Mg(2+). Mn(2+) is required as a cofactor. Post-translationally, the N-terminus is blocked.

It localises to the membrane. It carries out the reaction O-phospho-L-seryl-[protein] + H2O = L-seryl-[protein] + phosphate. It catalyses the reaction O-phospho-L-threonyl-[protein] + H2O = L-threonyl-[protein] + phosphate. Serine and threonine phosphatase. This Paramecium tetraurelia protein is Protein phosphatase 2C 1.